The primary structure comprises 215 residues: Glutaredoxin 2 (215 aa).

One can recognise a GST N-terminal domain in the interval 1–77 (MKLYIYDHCP…YVDKLDGKPL (77 aa)). Residues Cys-9 and Cys-12 are joined by a disulfide bond.

The protein belongs to the glutaredoxin family.

In terms of biological role, involved in reducing some disulfides in a coupled system with glutathione reductase. Does not act as hydrogen donor for ribonucleotide reductase. The protein is Glutaredoxin 2 (grxB) of Escherichia coli O157:H7.